Here is a 1040-residue protein sequence, read N- to C-terminus: Multidrug resistance protein MdtB (1040 aa).

The next 12 helical transmembrane spans lie at 16–36 (FILR…AGLV), 342–362 (DVQF…YLFL), 373–393 (IAVP…GFSV), 396–416 (LTLM…IVVI), 440–460 (IGFT…PLLF), 472–492 (FAVT…TLTP), 537–557 (WITL…YIVI), 865–885 (STIW…GVLY), 888–908 (FIHP…ALLA), 911–931 (ISGS…IGIV), 968–988 (ILMT…STGV), and 1002–1022 (GGLV…YLLF).

This sequence belongs to the resistance-nodulation-cell division (RND) (TC 2.A.6) family. MdtB subfamily. Part of a tripartite efflux system composed of MdtA, MdtB and MdtC. MdtB forms a heteromultimer with MdtC.

The protein localises to the cell inner membrane. This is Multidrug resistance protein MdtB from Musicola paradisiaca (strain Ech703) (Dickeya paradisiaca).